The primary structure comprises 157 residues: Small ribosomal subunit protein uS7 (157 aa).

It belongs to the universal ribosomal protein uS7 family. Part of the 30S ribosomal subunit. Contacts proteins S9 and S11.

In terms of biological role, one of the primary rRNA binding proteins, it binds directly to 16S rRNA where it nucleates assembly of the head domain of the 30S subunit. Is located at the subunit interface close to the decoding center, probably blocks exit of the E-site tRNA. In Francisella tularensis subsp. holarctica (strain OSU18), this protein is Small ribosomal subunit protein uS7.